The chain runs to 333 residues: Lipoyl synthase (333 aa).

Positions 55, 60, 66, 81, 85, 88, and 292 each coordinate [4Fe-4S] cluster. The Radical SAM core domain occupies 67–281 (WEDREATFLI…SAEAERLGFA (215 aa)).

This sequence belongs to the radical SAM superfamily. Lipoyl synthase family. [4Fe-4S] cluster serves as cofactor.

Its subcellular location is the cytoplasm. The enzyme catalyses [[Fe-S] cluster scaffold protein carrying a second [4Fe-4S](2+) cluster] + N(6)-octanoyl-L-lysyl-[protein] + 2 oxidized [2Fe-2S]-[ferredoxin] + 2 S-adenosyl-L-methionine + 4 H(+) = [[Fe-S] cluster scaffold protein] + N(6)-[(R)-dihydrolipoyl]-L-lysyl-[protein] + 4 Fe(3+) + 2 hydrogen sulfide + 2 5'-deoxyadenosine + 2 L-methionine + 2 reduced [2Fe-2S]-[ferredoxin]. The protein operates within protein modification; protein lipoylation via endogenous pathway; protein N(6)-(lipoyl)lysine from octanoyl-[acyl-carrier-protein]: step 2/2. Catalyzes the radical-mediated insertion of two sulfur atoms into the C-6 and C-8 positions of the octanoyl moiety bound to the lipoyl domains of lipoate-dependent enzymes, thereby converting the octanoylated domains into lipoylated derivatives. The polypeptide is Lipoyl synthase (Kineococcus radiotolerans (strain ATCC BAA-149 / DSM 14245 / SRS30216)).